Here is a 143-residue protein sequence, read N- to C-terminus: Alpha-amylase/trypsin inhibitor CM16 (143 aa).

The N-terminal stretch at 1 to 24 is a signal peptide; that stretch reads MASKSNCVLLLAAVLVSIFAAVAA.

This sequence belongs to the protease inhibitor I6 (cereal trypsin/alpha-amylase inhibitor) family. As to quaternary structure, subunit of the tetrameric inhibitor. Five disulfide bonds, which are essential for the inhibitor activity, are probably present. In terms of tissue distribution, developing endosperm.

The protein resides in the secreted. Functionally, alpha-amylase/trypsin inhibitor. It could be involved in insect defense mechanisms. In Triticum aestivum (Wheat), this protein is Alpha-amylase/trypsin inhibitor CM16.